Consider the following 136-residue polypeptide: Large ribosomal subunit protein bL17 (136 aa).

Belongs to the bacterial ribosomal protein bL17 family. Part of the 50S ribosomal subunit. Contacts protein L32.

This Rickettsia canadensis (strain McKiel) protein is Large ribosomal subunit protein bL17.